We begin with the raw amino-acid sequence, 535 residues long: uncharacterized protein (535 aa).

The interval 1-34 is disordered; sequence MKAIDNQIRNISSSHQDKHSDKVNSHQHHGKVDK. The span at 15–34 shows a compositional bias: basic and acidic residues; it reads HQDKHSDKVNSHQHHGKVDK.

This is an uncharacterized protein from Escherichia coli (strain K12).